Here is a 338-residue protein sequence, read N- to C-terminus: E3 ubiquitin-protein ligase RING1 (338 aa).

The interval 102 to 124 (TTTSSSASIDPNNPSLSGPTRSG) is disordered. The segment covering 110–121 (IDPNNPSLSGPT) has biased composition (polar residues). The RING-type; atypical zinc finger occupies 224 to 265 (CAVCMDDFEEGTEAKQMPCKHLYHKDCLLPWLELHNSCPVCR). Basic and acidic residues-rich tracts occupy residues 267-279 (ELPT…ERRV) and 298-309 (SDGDNRTVERSF). The interval 267 to 338 (ELPTDDPDYE…NAETRQEDLD (72 aa)) is disordered.

Auto-ubiquitinated as part of the enzymatic reaction. Mostly expressed in cotton fibers, and, to a lower extent, in leaves and flowers.

The catalysed reaction is S-ubiquitinyl-[E2 ubiquitin-conjugating enzyme]-L-cysteine + [acceptor protein]-L-lysine = [E2 ubiquitin-conjugating enzyme]-L-cysteine + N(6)-ubiquitinyl-[acceptor protein]-L-lysine.. Its pathway is protein modification; protein ubiquitination. Functionally, E3 ubiquitin-protein ligase which accepts ubiquitin from an E2 ubiquitin-conjugating enzyme in the form of a thioester and then directly transfers the ubiquitin to targeted substrates. Promotes polyubiquitination of target proteins. The chain is E3 ubiquitin-protein ligase RING1 (RING1) from Gossypium hirsutum (Upland cotton).